Reading from the N-terminus, the 202-residue chain is MSSKLRLGVAGPVGSGKTALVEAMCRRLRDQLQLAVVTNDIYTQEDAEFLTRVGALEPERIRGVETGGCPHTAIREDCSINRAAVEDLERNFPDLDVVLVESGGDNLAASFSPELVDLCIYVIDVAAGDKIPRKGGPGITRSDLLVINKIDLAVHVGADLEVMKRDTTRMRGERPWCFTNLRSGDGLESVLHFLLQQLPNRP.

Residue 11–18 (GPVGSGKT) coordinates GTP.

Belongs to the SIMIBI class G3E GTPase family. UreG subfamily. Homodimer. UreD, UreF and UreG form a complex that acts as a GTP-hydrolysis-dependent molecular chaperone, activating the urease apoprotein by helping to assemble the nickel containing metallocenter of UreC. The UreE protein probably delivers the nickel.

It localises to the cytoplasm. Functionally, facilitates the functional incorporation of the urease nickel metallocenter. This process requires GTP hydrolysis, probably effectuated by UreG. The chain is Urease accessory protein UreG from Prochlorococcus marinus (strain MIT 9313).